The primary structure comprises 566 residues: MERNSSDDEEDHQHLIPQNDTRIRHREDSVSSNATTIGGNQRSAFQIDDILHRVQHRGKISLNKRYVIVFVSLIISIGLLFLLTDPRELFAANFSSFKLDPLSNRVKESELRALYLLRQQQLALLSLWNGTLVNPSLNQSENALGSSVLFEDVKSAVSKQISLNKEIQEVLLSPHRSSNYSGGTDVDSVNFSYNRCRKVDQKLSDRKTVEWKPRSDKFLFAICLSGQMSNHLICLEKHMFFAALLDRVLVIPSSKFDYQYDRVIDIERINTCLGRNVVVAFDQFKEKAKKNHFRIDRFICYFSSPQLCYVDEEHIKKLKGLGISIDGKLEAPWSEDIKKPSKRTVQDVQMKFKSDDDVIAIGDVFYADMEQDWVMQPGGPINHKCKTLIEPSKLILLTAQRFIQTFLGKNFIALHFRRHGFLKFCNAKSPSCFYPIPQAAECIARIVERSNGAVIYLSTDAAESETSLLQSLVVVDGKIVPLVKRPPRNSAEKWDALLYRHGIEDDSQVDAMLDKTICAMSSVFIGASGSTFTEDILRLRKDWGTSSTCDEYLCRGEEPNFIAEDE.

Residues 1–14 (MERNSSDDEEDHQH) are compositionally biased toward basic and acidic residues. The segment at 1 to 37 (MERNSSDDEEDHQHLIPQNDTRIRHREDSVSSNATTI) is disordered. A helical; Signal-anchor for type II membrane protein transmembrane segment spans residues 66–86 (YVIVFVSLIISIGLLFLLTDP). N-linked (GlcNAc...) asparagine glycans are attached at residues Asn-93, Asn-129, Asn-138, Asn-179, and Asn-190. Residues 415–417 (HFR) and 531–532 (TF) contribute to the substrate site.

Belongs to the glycosyltransferase GT106 family.

It is found in the membrane. Its pathway is glycan metabolism. This is O-fucosyltransferase 36 from Arabidopsis thaliana (Mouse-ear cress).